The sequence spans 306 residues: Nucleotide-binding protein MUL_1815 (306 aa).

Residue 29-36 (GLSGAGRG) participates in ATP binding. A GTP-binding site is contributed by 80-83 (DVRS).

This sequence belongs to the RapZ-like family.

Functionally, displays ATPase and GTPase activities. This chain is Nucleotide-binding protein MUL_1815, found in Mycobacterium ulcerans (strain Agy99).